A 160-amino-acid polypeptide reads, in one-letter code: SsrA-binding protein (160 aa).

The tract at residues 135–160 is disordered; it reads KTHDKRETIKERDWKREQSRILRDRG. Basic and acidic residues predominate over residues 138 to 160; it reads DKRETIKERDWKREQSRILRDRG.

The protein belongs to the SmpB family.

It localises to the cytoplasm. Required for rescue of stalled ribosomes mediated by trans-translation. Binds to transfer-messenger RNA (tmRNA), required for stable association of tmRNA with ribosomes. tmRNA and SmpB together mimic tRNA shape, replacing the anticodon stem-loop with SmpB. tmRNA is encoded by the ssrA gene; the 2 termini fold to resemble tRNA(Ala) and it encodes a 'tag peptide', a short internal open reading frame. During trans-translation Ala-aminoacylated tmRNA acts like a tRNA, entering the A-site of stalled ribosomes, displacing the stalled mRNA. The ribosome then switches to translate the ORF on the tmRNA; the nascent peptide is terminated with the 'tag peptide' encoded by the tmRNA and targeted for degradation. The ribosome is freed to recommence translation, which seems to be the essential function of trans-translation. The polypeptide is SsrA-binding protein (Sphingomonas elodea).